A 522-amino-acid chain; its full sequence is METDLAEMPEKGVLSSQDSPHFQEKSTEEGEVAALRLTARSQAAAAAAAPGSRSLRGVHVPPPLHPAPAREEIKSTCSLKACFSLSLTLTYYRTAFLLSTENEGNLHFQCPSDVETRPQSKDSTSVQDFSKAESCKVAIIDRLTRNSVYDSNLEAALECENWLEKQQGNQERHLREMFTHMNSLSEETDHEHDVYWKSFNQKSVLITEDRVPKGSYAFHTLEKSLKQKSNLMKKQRTYKEKKPHKCNDCGELFTCHSVHIQHQRVHTGEKPYTCNECGKSFSHRANLTKHQRTHTRILFECRECKKTFTESSSLATHQRIHVGERPYECNECGKGFNRSTHLVQHQLIHTGVRPYECNECDKAFIHSSALIKHQRTHTGEKPYKCQECGKAFSHCSSLTKHQRVHTGEKPYECSECGKTFSQSTHLVQHQRIHTGEKPYECSECGKTFSQSSNFAKHQRIHIGKKPYKCSECGKAFIHSSALIQHQRTHTGEKPFRCNECGKSFKCSSSLIRHQRVHTEEQP.

A disordered region spans residues 1-30 (METDLAEMPEKGVLSSQDSPHFQEKSTEEG). C2H2-type zinc fingers lie at residues 244–266 (HKCNDCGELFTCHSVHIQHQRVH), 272–294 (YTCNECGKSFSHRANLTKHQRTH), 299–321 (FECRECKKTFTESSSLATHQRIH), 327–349 (YECNECGKGFNRSTHLVQHQLIH), 355–377 (YECNECDKAFIHSSALIKHQRTH), 383–405 (YKCQECGKAFSHCSSLTKHQRVH), 411–433 (YECSECGKTFSQSTHLVQHQRIH), 439–461 (YECSECGKTFSQSSNFAKHQRIH), 467–489 (YKCSECGKAFIHSSALIQHQRTH), and 495–517 (FRCNECGKSFKCSSSLIRHQRVH).

Belongs to the krueppel C2H2-type zinc-finger protein family.

The protein resides in the nucleus. Functionally, may be involved in transcriptional regulation. The chain is Putative zinc finger protein 286B (ZNF286B) from Homo sapiens (Human).